The following is a 35-amino-acid chain: Photosystem II reaction center protein T (35 aa).

A helical transmembrane segment spans residues Ala-3 to Phe-23.

It belongs to the PsbT family. In terms of assembly, PSII is composed of 1 copy each of membrane proteins PsbA, PsbB, PsbC, PsbD, PsbE, PsbF, PsbH, PsbI, PsbJ, PsbK, PsbL, PsbM, PsbT, PsbY, PsbZ, Psb30/Ycf12, at least 3 peripheral proteins of the oxygen-evolving complex and a large number of cofactors. It forms dimeric complexes.

The protein localises to the plastid. Its subcellular location is the chloroplast thylakoid membrane. Its function is as follows. Found at the monomer-monomer interface of the photosystem II (PS II) dimer, plays a role in assembly and dimerization of PSII. PSII is a light-driven water plastoquinone oxidoreductase, using light energy to abstract electrons from H(2)O, generating a proton gradient subsequently used for ATP formation. This Marchantia polymorpha (Common liverwort) protein is Photosystem II reaction center protein T.